We begin with the raw amino-acid sequence, 295 residues long: Non-selective voltage-gated ion channel VDAC2 (295 aa).

ATP-binding residues include lysine 24 and lysine 32. The residue at position 32 (lysine 32) is an N6-acetyllysine; alternate. The residue at position 32 (lysine 32) is an N6-succinyllysine; alternate. Residue lysine 32 forms a Glycyl lysine isopeptide (Lys-Gly) (interchain with G-Cter in ubiquitin); alternate linkage. A run of 2 beta stranded transmembrane segments spans residues 38–47 (LVKLDVKTKS) and 51–59 (VEFSTSGSS). Residues lysine 65 and lysine 73 each participate in a glycyl lysine isopeptide (Lys-Gly) (interchain with G-Cter in ubiquitin) cross-link. 4 beta stranded membrane passes run 66-76 (VSGTLETKYKW), 81-88 (LTFTEKWN), 92-101 (TLGTEIAIED), and 107-116 (LKLTFDTTFS). Lysine 121 carries the post-translational modification N6-acetyllysine; alternate. Lysine 121 is covalently cross-linked (Glycyl lysine isopeptide (Lys-Gly) (interchain with G-Cter in ubiquitin); alternate). Glycyl lysine isopeptide (Lys-Gly) (interchain with G-Cter in ubiquitin) cross-links involve residues lysine 122 and lysine 125. The next 4 beta stranded transmembrane spans lie at 123 to 132 (SGKIKSAYKR), 135 to 142 (INLGCDVD), 149 to 157 (AIHGSAVFG), and 162 to 170 (LAGYQMTFD). Residue lysine 173 forms a Glycyl lysine isopeptide (Lys-Gly) (interchain with G-Cter in ubiquitin) linkage. 6 beta stranded membrane passes run 175-187 (KLTR…GYRT), 190-197 (FQLHTNVN), 201-210 (EFGGSIYQKV), 214-223 (FDTSVNLAWT), 230-239 (RFGIAAKYQL), and 243-250 (ASISAKVN). Serine 205 carries the phosphoserine modification. A Phosphoserine modification is found at serine 252. Residues 254–256 (LIG) and 272–276 (SALVD) contribute to the NAD(+) site. 2 beta stranded membrane-spanning segments follow: residues 254–263 (LIGVGYTQTL) and 266–275 (GVKLTLSALV). N6-acetyllysine; alternate is present on lysine 278. Residue lysine 278 forms a Glycyl lysine isopeptide (Lys-Gly) (interchain with G-Cter in ubiquitin); alternate linkage. The beta stranded transmembrane segment at 285–294 (HKLGLALELE) threads the bilayer. A Glycyl lysine isopeptide (Lys-Gly) (interchain with G-Cter in ubiquitin) cross-link involves residue lysine 286.

This sequence belongs to the eukaryotic mitochondrial porin family. Monomer, homodimer and higher order oligomers; formation of higher order structures is necessary for scramblase activity. Interacts with ARMC12 in a TBC1D21-dependent manner. Interacts with KLC3. Interacts with SPATA33. Interacts with PPP3CC in a SPATA33-dependent manner. In terms of processing, ubiquitinated by PRKN during mitophagy, leading to its degradation and enhancement of mitophagy. Deubiquitinated by USP30.

It is found in the mitochondrion outer membrane. The protein localises to the membrane. It catalyses the reaction chloride(in) = chloride(out). The enzyme catalyses K(+)(in) = K(+)(out). It carries out the reaction a 1,2-diacyl-sn-glycero-3-phospho-L-serine(in) = a 1,2-diacyl-sn-glycero-3-phospho-L-serine(out). The catalysed reaction is a 1,2-diacyl-sn-glycero-3-phosphocholine(in) = a 1,2-diacyl-sn-glycero-3-phosphocholine(out). It catalyses the reaction a 1,2-diacyl-sn-glycero-3-phospho-(1D-myo-inositol)(in) = a 1,2-diacyl-sn-glycero-3-phospho-(1D-myo-inositol)(out). Functionally, non-selective voltage-gated ion channel that mediates the transport of anions and cations through the mitochondrion outer membrane and plasma membrane. The channel adopts an open conformation at zero mV and a closed conformation at both positive and negative potentials. There are two populations of channels; the main that functions in a lower open-state conductance with lower ion selectivity, that switch, in a voltage-dependent manner, from the open to a low-conducting 'closed' state and the other that has a normal ion selectivity in the typical high conductance, 'open' state. Binds various lipids, including the sphingolipid ceramide, the phospholipid phosphatidylcholine, and the sterols cholesterol and oxysterol. Binding of ceramide promotes the mitochondrial outer membrane permeabilization (MOMP) apoptotic pathway. In terms of biological role, catalyzes the scrambling of phospholipids across the outer mitochondrial membrane; the mechanism is unrelated to channel activity and is capable of translocating both anionic and zwitterionic phospholipids. The protein is Non-selective voltage-gated ion channel VDAC2 of Mesocricetus auratus (Golden hamster).